Here is a 288-residue protein sequence, read N- to C-terminus: GTP-binding protein 8 (288 aa).

Residues 109–282 enclose the EngB-type G domain; it reads HRPEVCFIGR…RCFIADITGN (174 aa). Residues 117-124, 146-150, 164-167, 226-229, and 261-263 contribute to the GTP site; these read GRSNVGKS, GHTKK, DMPG, TKID, and VSA. Mg(2+) is bound by residues Ser-124 and Thr-148.

It belongs to the TRAFAC class TrmE-Era-EngA-EngB-Septin-like GTPase superfamily. EngB GTPase family. It depends on Mg(2+) as a cofactor.

The chain is GTP-binding protein 8 (GTPBP8) from Bos taurus (Bovine).